The primary structure comprises 185 residues: Elongation factor P (185 aa).

This sequence belongs to the elongation factor P family.

The protein resides in the cytoplasm. Its pathway is protein biosynthesis; polypeptide chain elongation. Involved in peptide bond synthesis. Stimulates efficient translation and peptide-bond synthesis on native or reconstituted 70S ribosomes in vitro. Probably functions indirectly by altering the affinity of the ribosome for aminoacyl-tRNA, thus increasing their reactivity as acceptors for peptidyl transferase. This Bacillus cereus (strain G9842) protein is Elongation factor P.